Reading from the N-terminus, the 324-residue chain is tRNA N6-adenosine threonylcarbamoyltransferase (324 aa).

His107, His111, and Tyr127 together coordinate Fe cation. Substrate is bound by residues 127–131, Asp159, Gly172, Glu176, and Asn257; that span reads YVSGG. Asp285 contributes to the Fe cation binding site.

It belongs to the KAE1 / TsaD family. As to quaternary structure, monomer. Component of the KEOPS complex that consists of Kae1, Bud32, Cgi121 and Pcc1; the whole complex dimerizes. The cofactor is Fe(2+).

The protein resides in the cytoplasm. It carries out the reaction L-threonylcarbamoyladenylate + adenosine(37) in tRNA = N(6)-L-threonylcarbamoyladenosine(37) in tRNA + AMP + H(+). Functionally, required for the formation of a threonylcarbamoyl group on adenosine at position 37 (t(6)A37) in tRNAs that read codons beginning with adenine. Is a component of the KEOPS complex that is probably involved in the transfer of the threonylcarbamoyl moiety of threonylcarbamoyl-AMP (TC-AMP) to the N6 group of A37. Kae1 likely plays a direct catalytic role in this reaction, but requires other protein(s) of the complex to fulfill this activity. This Thermococcus sibiricus (strain DSM 12597 / MM 739) protein is tRNA N6-adenosine threonylcarbamoyltransferase.